Consider the following 431-residue polypeptide: Enolase (431 aa).

Glutamine 167 contributes to the (2R)-2-phosphoglycerate binding site. The active-site Proton donor is glutamate 209. Mg(2+) is bound by residues aspartate 246, glutamate 290, and aspartate 316. Lysine 341, arginine 370, serine 371, and lysine 392 together coordinate (2R)-2-phosphoglycerate. The active-site Proton acceptor is the lysine 341.

The protein belongs to the enolase family. In terms of assembly, component of the RNA degradosome, a multiprotein complex involved in RNA processing and mRNA degradation. The cofactor is Mg(2+).

It localises to the cytoplasm. The protein resides in the secreted. It is found in the cell surface. It catalyses the reaction (2R)-2-phosphoglycerate = phosphoenolpyruvate + H2O. It participates in carbohydrate degradation; glycolysis; pyruvate from D-glyceraldehyde 3-phosphate: step 4/5. In terms of biological role, catalyzes the reversible conversion of 2-phosphoglycerate (2-PG) into phosphoenolpyruvate (PEP). It is essential for the degradation of carbohydrates via glycolysis. The chain is Enolase from Shigella flexneri serotype 5b (strain 8401).